We begin with the raw amino-acid sequence, 486 residues long: Ribulose bisphosphate carboxylase large chain (486 aa).

Residues asparagine 125 and threonine 175 each coordinate substrate. Lysine 177 serves as the catalytic Proton acceptor. Substrate is bound at residue lysine 179. Mg(2+) contacts are provided by lysine 203, aspartate 205, and glutamate 206. Lysine 203 bears the N6-carboxylysine mark. The Proton acceptor role is filled by histidine 295. Arginine 296, histidine 328, and serine 380 together coordinate substrate.

This sequence belongs to the RuBisCO large chain family. Type I subfamily. In terms of assembly, heterohexadecamer of 8 large chains and 8 small chains. It depends on Mg(2+) as a cofactor.

It carries out the reaction 2 (2R)-3-phosphoglycerate + 2 H(+) = D-ribulose 1,5-bisphosphate + CO2 + H2O. The enzyme catalyses D-ribulose 1,5-bisphosphate + O2 = 2-phosphoglycolate + (2R)-3-phosphoglycerate + 2 H(+). In terms of biological role, ruBisCO catalyzes two reactions: the carboxylation of D-ribulose 1,5-bisphosphate, the primary event in carbon dioxide fixation, as well as the oxidative fragmentation of the pentose substrate. Both reactions occur simultaneously and in competition at the same active site. This chain is Ribulose bisphosphate carboxylase large chain, found in Afipia carboxidovorans (strain ATCC 49405 / DSM 1227 / KCTC 32145 / OM5) (Oligotropha carboxidovorans).